We begin with the raw amino-acid sequence, 358 residues long: WD repeat domain phosphoinositide-interacting protein 4 (358 aa).

WD repeat units follow at residues 2–40 (AQQR…EKGH) and 188–228 (AHQS…KLVE). Positions 229–232 (LRRG) match the L/FRRG motif motif. A WD 3 repeat occupies 233–272 (TDPATLYCINFSHDSSFLCASSDKGTVHIFALKDTKLNRR).

Belongs to the WD repeat PROPPIN family.

The protein localises to the preautophagosomal structure. Component of the autophagy machinery that controls the major intracellular degradation process by which cytoplasmic materials are packaged into autophagosomes and delivered to lysosomes for degradation. Binds phosphatidylinositol 3-phosphate (PtdIns3P). The chain is WD repeat domain phosphoinositide-interacting protein 4 (wdr45) from Danio rerio (Zebrafish).